The chain runs to 517 residues: MHSLLVLFVSLLALGALKKHLDFRAAVDKIHNYPGLRFIFGVQSFIFGKRIPYFAAGGLSLWDTKHQDFVDHDADIISSVNIFPTCATYMIADAQAIKEITTNRARFPKPLQQYKILTFFGSNIVVTEADEWKRHRKISAPSFSERNNRLVWDETINIVKELSDDVWRGKNEVTMDNIVDLTVPIALFVIGVAGFGRRMSWVEDFTVPAGHSMPFKDALHLVSNHLWMKVLLPAWFLRSAPIPRVRKFHTAYEDLEKYMIEMIQARKTAEKKEERYDLFSSLLDANEEETDGNTKLSDSELMGNIFIYLIAGHETTAHTLAFTFILLALYQDEQEKLYQHIKSVVPDDRLPAYEEMGKLTYCYAMLLETLRMFPPVNLIPKQAAEDTTLHTSNMAGEPVAVPCLAGTALAIHTPGLHYNPRYWEDPFAFKPARFLGDWPRDAFLPFSAGPRSCLGRRFSETEAVAVLTYIVARWRIDVKEEPQFAGETFEQRKARLLDSKSAITLYPVRAPLVFKRR.

The helical transmembrane segment at 3-23 (SLLVLFVSLLALGALKKHLDF) threads the bilayer. Cys453 lines the heme pocket.

This sequence belongs to the cytochrome P450 family. Heme is required as a cofactor.

The protein localises to the membrane. Its pathway is secondary metabolite biosynthesis. Cytochrome P450 monooxygenase that is able to use trans-stilbene as a substrate for oxidation. The protein is Cytochrome P450 monooxygenase 124 of Postia placenta (strain ATCC 44394 / Madison 698-R) (Brown rot fungus).